Here is a 93-residue protein sequence, read N- to C-terminus: uncharacterized protein (93 aa).

To B.subtilis YdcN C-terminal region.

This is an uncharacterized protein from Methanocaldococcus jannaschii (strain ATCC 43067 / DSM 2661 / JAL-1 / JCM 10045 / NBRC 100440) (Methanococcus jannaschii).